The sequence spans 375 residues: Serpin B5 (375 aa).

N99, N133, N188, N298, and N361 each carry an N-linked (GlcNAc...) asparagine glycan.

It belongs to the serpin family. Ov-serpin subfamily. As to quaternary structure, interacts with IRF6.

Its subcellular location is the secreted. The protein resides in the extracellular space. Functionally, tumor suppressor. It blocks the growth, invasion, and metastatic properties of mammary tumors. As it does not undergo the S (stressed) to R (relaxed) conformational transition characteristic of active serpins, it exhibits no serine protease inhibitory activity. This chain is Serpin B5 (Serpinb5), found in Rattus norvegicus (Rat).